We begin with the raw amino-acid sequence, 292 residues long: 33 kDa chaperonin (292 aa).

Disulfide bonds link Cys-230-Cys-232 and Cys-263-Cys-266.

Belongs to the HSP33 family. In terms of processing, under oxidizing conditions two disulfide bonds are formed involving the reactive cysteines. Under reducing conditions zinc is bound to the reactive cysteines and the protein is inactive.

The protein localises to the cytoplasm. Its function is as follows. Redox regulated molecular chaperone. Protects both thermally unfolding and oxidatively damaged proteins from irreversible aggregation. Plays an important role in the bacterial defense system toward oxidative stress. In Cronobacter sakazakii (strain ATCC BAA-894) (Enterobacter sakazakii), this protein is 33 kDa chaperonin.